The following is a 1147-amino-acid chain: PDZ domain-containing protein 8 (1147 aa).

A helical transmembrane segment spans residues 2-24 (GLLLLILASAVLGSFLTLLAQFL). Residues 87–293 (APPTLETCYF…LPSYKIRFKP (207 aa)) form the SMP-LTD domain. The PDZ domain maps to 365-448 (TVELIKGNLQ…RVLVYYQRPA (84 aa)). Ser490, Ser515, and Ser532 each carry phosphoserine. Positions 504–673 (ELKEETQPLS…DSSDDPQMWE (170 aa)) are disordered. Residues 510-524 (QPLSHSPKRTPTTLS) show a composition bias toward polar residues. The segment covering 557–576 (KPSTLKTSETTEAAQVSKPQ) has biased composition (polar residues). The segment covering 580–596 (FKPPVPPRPQGRVPLPP) has biased composition (pro residues). Residues 833-884 (KHSFQDTQFQNPTWCDYCKKKVWTKAASQCMFCAYVCHKKCQEKCLAETPLC) form a Phorbol-ester/DAG-type zinc finger. The tract at residues 948–990 (RLSEPGTDLVEPSPKHTPNTSDNEGSDTEVCGSNSPSKRGNSA) is disordered. Ser960 and Ser973 each carry phosphoserine. The segment covering 978 to 987 (CGSNSPSKRG) has biased composition (polar residues). The stretch at 1021–1056 (PTEERIQKLEFMLDKLQNEIDQELEHNNSLVREEKE) forms a coiled coil. A compositionally biased stretch (polar residues) spans 1126–1137 (QLIDSQPFSNIS). Residues 1126–1147 (QLIDSQPFSNISDDLFGPSESV) are disordered.

As to quaternary structure, interacts with MSN.

The protein resides in the endoplasmic reticulum membrane. Molecular tethering protein that connects endoplasmic reticulum and mitochondria membranes. PDZD8-dependent endoplasmic reticulum-mitochondria membrane tethering is essential for endoplasmic reticulum-mitochondria Ca(2+) transfer. In neurons, involved in the regulation of dendritic Ca(2+) dynamics by regulating mitochondrial Ca(2+) uptake in neurons. The protein is PDZ domain-containing protein 8 of Mus musculus (Mouse).